We begin with the raw amino-acid sequence, 427 residues long: Trigger factor (427 aa).

Positions 163-248 (GDTVVIDFVG…VHEVKAKEVP (86 aa)) constitute a PPIase FKBP-type domain.

Belongs to the FKBP-type PPIase family. Tig subfamily.

It localises to the cytoplasm. The enzyme catalyses [protein]-peptidylproline (omega=180) = [protein]-peptidylproline (omega=0). Functionally, involved in protein export. Acts as a chaperone by maintaining the newly synthesized protein in an open conformation. Functions as a peptidyl-prolyl cis-trans isomerase. This Streptococcus equi subsp. zooepidemicus (strain H70) protein is Trigger factor.